A 230-amino-acid chain; its full sequence is Ribonuclease 3 (230 aa).

One can recognise an RNase III domain in the interval 1 to 134 (MKQLEELLST…FLGALLLDKG (134 aa)). A Mg(2+)-binding site is contributed by Glu47. The active site involves Asp51. Mg(2+) is bound by residues Asp120 and Glu123. Residue Glu123 is part of the active site. A DRBM domain is found at 160–229 (DYKTCLQEFL…AKNALAQLSE (70 aa)).

Belongs to the ribonuclease III family. In terms of assembly, homodimer. It depends on Mg(2+) as a cofactor.

It is found in the cytoplasm. The catalysed reaction is Endonucleolytic cleavage to 5'-phosphomonoester.. Digests double-stranded RNA. Involved in the processing of primary rRNA transcript to yield the immediate precursors to the large and small rRNAs (23S and 16S). Processes some mRNAs, and tRNAs when they are encoded in the rRNA operon. Processes pre-crRNA and tracrRNA of type II CRISPR loci if present in the organism. This Streptococcus pyogenes serotype M3 (strain SSI-1) protein is Ribonuclease 3.